Reading from the N-terminus, the 304-residue chain is Recombination-associated protein RdgC (304 aa).

The protein belongs to the RdgC family.

Its subcellular location is the cytoplasm. The protein resides in the nucleoid. Its function is as follows. May be involved in recombination. This is Recombination-associated protein RdgC from Shewanella sp. (strain W3-18-1).